We begin with the raw amino-acid sequence, 270 residues long: MAGSAGEQTISGYIQHHLTNASVGEGFWTFHVDTLAWSVVLGLVFILSFRAVAKKASAGVPGKWQACVELIVEFVDDTVKSTYHGKSALIAPLALTIFVWVLLMNLMDLIPVDFLPTAAALIAGESMDVIAAGQSHTYMKVVPTTDVNMTFALSLGVFALMIFYSVKIKGFGGFMKELYAHPFNTPWLYWFNFILELVSLIAKPLSLSLRLFGNLYAGELIFILIAGTLGVWQLPIHFLWAAFHLLVIPLQAFIFMMLTIVYLSLASEEH.

Helical transmembrane passes span 27–47 (FWTFHVDTLAWSVVLGLVFIL), 90–110 (IAPLALTIFVWVLLMNLMDLI), 147–166 (VNMTFALSLGVFALMIFYSV), 182–202 (PFNTPWLYWFNFILELVSLIA), 211–231 (LFGNLYAGELIFILIAGTLGV), and 238–258 (FLWAAFHLLVIPLQAFIFMML).

This sequence belongs to the ATPase A chain family. F-type ATPases have 2 components, CF(1) - the catalytic core - and CF(0) - the membrane proton channel. CF(1) has five subunits: alpha(3), beta(3), gamma(1), delta(1), epsilon(1). CF(0) has three main subunits: a(1), b(2) and c(9-12). The alpha and beta chains form an alternating ring which encloses part of the gamma chain. CF(1) is attached to CF(0) by a central stalk formed by the gamma and epsilon chains, while a peripheral stalk is formed by the delta and b chains.

Its subcellular location is the cell inner membrane. Key component of the proton channel; it plays a direct role in the translocation of protons across the membrane. The sequence is that of ATP synthase subunit a from Pseudoalteromonas atlantica (strain T6c / ATCC BAA-1087).